The following is a 466-amino-acid chain: Ribulose bisphosphate carboxylase large chain (466 aa).

Lysine 5 carries the post-translational modification N6,N6,N6-trimethyllysine. Substrate contacts are provided by asparagine 114 and threonine 164. Catalysis depends on lysine 166, which acts as the Proton acceptor. A substrate-binding site is contributed by lysine 168. Positions 192, 194, and 195 each coordinate Mg(2+). An N6-carboxylysine modification is found at lysine 192. Catalysis depends on histidine 285, which acts as the Proton acceptor. Substrate is bound by residues arginine 286, histidine 318, and serine 370.

Belongs to the RuBisCO large chain family. Type I subfamily. In terms of assembly, heterohexadecamer of 8 large chains and 8 small chains; disulfide-linked. The disulfide link is formed within the large subunit homodimers. Requires Mg(2+) as cofactor. In terms of processing, the disulfide bond which can form in the large chain dimeric partners within the hexadecamer appears to be associated with oxidative stress and protein turnover.

It localises to the plastid. Its subcellular location is the chloroplast. The catalysed reaction is 2 (2R)-3-phosphoglycerate + 2 H(+) = D-ribulose 1,5-bisphosphate + CO2 + H2O. The enzyme catalyses D-ribulose 1,5-bisphosphate + O2 = 2-phosphoglycolate + (2R)-3-phosphoglycerate + 2 H(+). Its function is as follows. RuBisCO catalyzes two reactions: the carboxylation of D-ribulose 1,5-bisphosphate, the primary event in carbon dioxide fixation, as well as the oxidative fragmentation of the pentose substrate in the photorespiration process. Both reactions occur simultaneously and in competition at the same active site. This chain is Ribulose bisphosphate carboxylase large chain, found in Thespesia populnea (Portia tree).